The following is a 505-amino-acid chain: ATP synthase subunit alpha (505 aa).

171-178 (GDRQTGKT) contributes to the ATP binding site.

Belongs to the ATPase alpha/beta chains family. F-type ATPases have 2 components, CF(1) - the catalytic core - and CF(0) - the membrane proton channel. CF(1) has five subunits: alpha(3), beta(3), gamma(1), delta(1), epsilon(1). CF(0) has three main subunits: a(1), b(2) and c(9-12). The alpha and beta chains form an alternating ring which encloses part of the gamma chain. CF(1) is attached to CF(0) by a central stalk formed by the gamma and epsilon chains, while a peripheral stalk is formed by the delta and b chains.

Its subcellular location is the cell inner membrane. The catalysed reaction is ATP + H2O + 4 H(+)(in) = ADP + phosphate + 5 H(+)(out). In terms of biological role, produces ATP from ADP in the presence of a proton gradient across the membrane. The alpha chain is a regulatory subunit. In Aliarcobacter butzleri (strain RM4018) (Arcobacter butzleri), this protein is ATP synthase subunit alpha.